A 288-amino-acid polypeptide reads, in one-letter code: Ribosomal RNA small subunit methyltransferase A (288 aa).

The S-adenosyl-L-methionine site is built by N37, L39, G64, E86, D112, and N131.

Belongs to the class I-like SAM-binding methyltransferase superfamily. rRNA adenine N(6)-methyltransferase family. RsmA subfamily.

The protein resides in the cytoplasm. It carries out the reaction adenosine(1518)/adenosine(1519) in 16S rRNA + 4 S-adenosyl-L-methionine = N(6)-dimethyladenosine(1518)/N(6)-dimethyladenosine(1519) in 16S rRNA + 4 S-adenosyl-L-homocysteine + 4 H(+). Functionally, specifically dimethylates two adjacent adenosines (A1518 and A1519) in the loop of a conserved hairpin near the 3'-end of 16S rRNA in the 30S particle. May play a critical role in biogenesis of 30S subunits. The polypeptide is Ribosomal RNA small subunit methyltransferase A (Rhodospirillum rubrum (strain ATCC 11170 / ATH 1.1.1 / DSM 467 / LMG 4362 / NCIMB 8255 / S1)).